Here is a 213-residue protein sequence, read N- to C-terminus: Guanylate kinase (213 aa).

The region spanning 12-190 (GLCLVVAAPS…AIDQVRTILH (179 aa)) is the Guanylate kinase-like domain. 19 to 26 (APSGAGKS) serves as a coordination point for ATP.

Belongs to the guanylate kinase family.

It is found in the cytoplasm. The catalysed reaction is GMP + ATP = GDP + ADP. In terms of biological role, essential for recycling GMP and indirectly, cGMP. The sequence is that of Guanylate kinase from Granulibacter bethesdensis (strain ATCC BAA-1260 / CGDNIH1).